Here is a 201-residue protein sequence, read N- to C-terminus: Small ribosomal subunit protein uS4c (201 aa).

A disordered region spans residues 16–43 (GALPGLTSKKPRSASDLRNQSRSGKRSQ). Residues 89-169 (MRLDNILFRL…LPKHLTLHSF (81 aa)) enclose the S4 RNA-binding domain.

This sequence belongs to the universal ribosomal protein uS4 family. Part of the 30S ribosomal subunit. Contacts protein S5. The interaction surface between S4 and S5 is involved in control of translational fidelity.

The protein resides in the plastid. The protein localises to the chloroplast. One of the primary rRNA binding proteins, it binds directly to 16S rRNA where it nucleates assembly of the body of the 30S subunit. Functionally, with S5 and S12 plays an important role in translational accuracy. In Nymphaea alba (White water-lily), this protein is Small ribosomal subunit protein uS4c (rps4).